The sequence spans 72 residues: SRY-related protein AES6 (72 aa).

Positions 1-69 form a DNA-binding region, HMG box; that stretch reads VKRPMNAFMV…KHMADYPDYK (69 aa).

It is found in the nucleus. In Alligator mississippiensis (American alligator), this protein is SRY-related protein AES6.